A 191-amino-acid polypeptide reads, in one-letter code: Imidazoleglycerol-phosphate dehydratase (191 aa).

It belongs to the imidazoleglycerol-phosphate dehydratase family.

The protein localises to the cytoplasm. The catalysed reaction is D-erythro-1-(imidazol-4-yl)glycerol 3-phosphate = 3-(imidazol-4-yl)-2-oxopropyl phosphate + H2O. It participates in amino-acid biosynthesis; L-histidine biosynthesis; L-histidine from 5-phospho-alpha-D-ribose 1-diphosphate: step 6/9. In Thermodesulfovibrio yellowstonii (strain ATCC 51303 / DSM 11347 / YP87), this protein is Imidazoleglycerol-phosphate dehydratase.